The chain runs to 206 residues: Large ribosomal subunit protein uL4 (206 aa).

The disordered stretch occupies residues 43 to 78 (NQRQGTHDTKTRAEVRGGGRKPWRQKGTGRARAGSS). The span at 47–59 (GTHDTKTRAEVRG) shows a compositional bias: basic and acidic residues. Residues 60–71 (GGRKPWRQKGTG) show a composition bias toward basic residues.

The protein belongs to the universal ribosomal protein uL4 family. Part of the 50S ribosomal subunit.

Its function is as follows. One of the primary rRNA binding proteins, this protein initially binds near the 5'-end of the 23S rRNA. It is important during the early stages of 50S assembly. It makes multiple contacts with different domains of the 23S rRNA in the assembled 50S subunit and ribosome. In terms of biological role, forms part of the polypeptide exit tunnel. This chain is Large ribosomal subunit protein uL4, found in Desulforamulus reducens (strain ATCC BAA-1160 / DSM 100696 / MI-1) (Desulfotomaculum reducens).